The chain runs to 172 residues: Small ribosomal subunit protein uS5 (172 aa).

Positions 17–80 (LREKMISVNR…EQARRNMFKV (64 aa)) constitute an S5 DRBM domain.

The protein belongs to the universal ribosomal protein uS5 family. In terms of assembly, part of the 30S ribosomal subunit. Contacts proteins S4 and S8.

Its function is as follows. With S4 and S12 plays an important role in translational accuracy. Located at the back of the 30S subunit body where it stabilizes the conformation of the head with respect to the body. The chain is Small ribosomal subunit protein uS5 from Burkholderia pseudomallei (strain 1106a).